The sequence spans 279 residues: Tryptophan synthase alpha chain (279 aa).

Residues E50 and D61 each act as proton acceptor in the active site.

It belongs to the TrpA family. In terms of assembly, tetramer of two alpha and two beta chains.

The catalysed reaction is (1S,2R)-1-C-(indol-3-yl)glycerol 3-phosphate + L-serine = D-glyceraldehyde 3-phosphate + L-tryptophan + H2O. The protein operates within amino-acid biosynthesis; L-tryptophan biosynthesis; L-tryptophan from chorismate: step 5/5. The alpha subunit is responsible for the aldol cleavage of indoleglycerol phosphate to indole and glyceraldehyde 3-phosphate. The chain is Tryptophan synthase alpha chain from Sinorhizobium medicae (strain WSM419) (Ensifer medicae).